We begin with the raw amino-acid sequence, 294 residues long: S-adenosylmethionine uptake transporter (294 aa).

A run of 10 helical transmembrane segments spans residues 4–24, 39–59, 74–91, 98–118, 121–141, 148–168, 177–197, 207–227, 237–257, and 260–280; these read ALKT…SSSA, FEVA…FVFY, ILRG…TYGL, TATV…VFFL, NIIW…VVTL, FNPE…LDII, SMIS…LPVA, FELA…FFLL, ATAP…YFIF, and FPDK…LFII. 2 EamA domains span residues 21 to 141 and 160 to 280; these read SSSA…VVTL and ISFA…LFII.

It belongs to the drug/metabolite transporter (DMT) superfamily. 10 TMS drug/metabolite exporter (DME) (TC 2.A.7.3) family.

Its subcellular location is the cell inner membrane. In terms of biological role, transports S-adenosylmethionine. The sequence is that of S-adenosylmethionine uptake transporter (sam) from Rickettsia felis (strain ATCC VR-1525 / URRWXCal2) (Rickettsia azadi).